We begin with the raw amino-acid sequence, 550 residues long: Hydroxylamine reductase (550 aa).

Residues C3, C6, C18, and C25 each coordinate [2Fe-2S] cluster. The hybrid [4Fe-2O-2S] cluster site is built by H249, E273, C317, C405, C433, C458, E492, and K494. A Cysteine persulfide modification is found at C405.

The protein belongs to the HCP family. Requires [2Fe-2S] cluster as cofactor. Hybrid [4Fe-2O-2S] cluster is required as a cofactor.

Its subcellular location is the cytoplasm. The enzyme catalyses A + NH4(+) + H2O = hydroxylamine + AH2 + H(+). In terms of biological role, catalyzes the reduction of hydroxylamine to form NH(3) and H(2)O. The chain is Hydroxylamine reductase from Yersinia pseudotuberculosis serotype O:1b (strain IP 31758).